Reading from the N-terminus, the 157-residue chain is Large ribosomal subunit protein uL22 (157 aa).

Belongs to the universal ribosomal protein uL22 family. Part of the 50S ribosomal subunit.

Its function is as follows. This protein binds specifically to 23S rRNA. It makes multiple contacts with different domains of the 23S rRNA in the assembled 50S subunit and ribosome. In terms of biological role, the globular domain of the protein is located near the polypeptide exit tunnel on the outside of the subunit, while an extended beta-hairpin is found that lines the wall of the exit tunnel in the center of the 70S ribosome. This is Large ribosomal subunit protein uL22 from Staphylothermus marinus (strain ATCC 43588 / DSM 3639 / JCM 9404 / F1).